A 273-amino-acid chain; its full sequence is SPbeta prophage-derived uncharacterized protein YomF (273 aa).

Positions Val119–Lys149 form a coiled coil.

This chain is SPbeta prophage-derived uncharacterized protein YomF (yomF), found in Bacillus subtilis (strain 168).